We begin with the raw amino-acid sequence, 54 residues long: Conotoxin Cal6.17 (54 aa).

Residues 1-19 (MSGTGVLLLTLLLLVTMAT) form the signal peptide. Disulfide bonds link cysteine 24–cysteine 39, cysteine 32–cysteine 49, and cysteine 38–cysteine 53.

As to expression, expressed by the venom duct.

The protein resides in the secreted. In terms of biological role, probable neurotoxin. This Californiconus californicus (California cone) protein is Conotoxin Cal6.17.